The primary structure comprises 670 residues: Zinc finger protein 233 (670 aa).

In terms of domain architecture, KRAB spans 8 to 79 (VTFKDVAVVF…ETEIQGDGCS (72 aa)). A C2H2-type 1; degenerate zinc finger spans residues 258 to 280 (QTSDENGKGLSVGSNLELHQQLH). The C2H2-type 2; degenerate zinc finger occupies 311–336 (EKCYRNGDSGEGFSQGSHLQPHQRVS). Residues 342–364 (YRCQVYARSSNQNSCLPSHELTH) form a C2H2-type 3; degenerate zinc finger. The C2H2-type 4; degenerate zinc finger occupies 370 to 392 (CTCGRCGKGFHHSLDFDIHCVDS). Residues 398–420 (CKCDVYDKGFSQTSQLQAHQRGH) form a C2H2-type 5; degenerate zinc finger. 7 consecutive C2H2-type zinc fingers follow at residues 452–474 (YKCEVCDKGFSKASNLQAHQRIH), 480–502 (YKCDVCDKNFSRNSHLQAHQRVH), 508–530 (YKCDTCGKDFSQISHLQAHQRVH), 536–558 (YKCETCGKGFSQSSHLQDHQQVH), 564–586 (YKCDVCGKGFSWSSHLQAHQRVH), 592–614 (YKCEECRKGFIWNSYLHVHQRIH), and 620–642 (YKCGMCGKSFSQTSHLQAHQRVH).

Belongs to the krueppel C2H2-type zinc-finger protein family.

Its subcellular location is the nucleus. In terms of biological role, may be involved in transcriptional regulation. This is Zinc finger protein 233 (ZNF233) from Homo sapiens (Human).